The chain runs to 639 residues: NADP-dependent malic enzyme, chloroplastic (639 aa).

A chloroplast-targeting transit peptide spans 1–49 (MLSARAAATAAAAAASPLWKRGEGGSSGSGSGCTSCREVRRRAAAVRVR). Residues 15-34 (ASPLWKRGEGGSSGSGSGCT) form a disordered region. Tyr187 functions as the Proton donor in the catalytic mechanism. Arg240 is an NAD(+) binding site. The active-site Proton acceptor is the Lys258. A divalent metal cation-binding residues include Glu330, Asp331, and Asp354. Asp354 is an NAD(+) binding site. 383-399 (LFLGAGEAGTGIAELIA) contacts NADP(+). Asn495 is a binding site for NAD(+).

It belongs to the malic enzymes family. Homotetramer. The cofactor is Mg(2+). Mn(2+) is required as a cofactor.

Its subcellular location is the plastid. The protein localises to the chloroplast. It catalyses the reaction (S)-malate + NADP(+) = pyruvate + CO2 + NADPH. The enzyme catalyses oxaloacetate + H(+) = pyruvate + CO2. Its pathway is photosynthesis; C4 acid pathway. Functionally, the chloroplastic ME isoform decarboxylates malate shuttled from neighboring mesophyll cells. The CO(2) released is then refixed by ribulose-bisphosphate carboxylase. This pathway eliminates the photorespiratory loss of CO(2) that occurs in most plants. The chain is NADP-dependent malic enzyme, chloroplastic (ME6) from Oryza sativa subsp. japonica (Rice).